Here is a 215-residue protein sequence, read N- to C-terminus: Methylthioribulose-1-phosphate dehydratase (215 aa).

The Zn(2+) site is built by H103 and H105.

The protein belongs to the aldolase class II family. MtnB subfamily. It depends on Zn(2+) as a cofactor.

It carries out the reaction 5-(methylsulfanyl)-D-ribulose 1-phosphate = 5-methylsulfanyl-2,3-dioxopentyl phosphate + H2O. Its pathway is amino-acid biosynthesis; L-methionine biosynthesis via salvage pathway; L-methionine from S-methyl-5-thio-alpha-D-ribose 1-phosphate: step 2/6. Its function is as follows. Catalyzes the dehydration of methylthioribulose-1-phosphate (MTRu-1-P) into 2,3-diketo-5-methylthiopentyl-1-phosphate (DK-MTP-1-P). The sequence is that of Methylthioribulose-1-phosphate dehydratase from Persephonella marina (strain DSM 14350 / EX-H1).